The primary structure comprises 327 residues: 2-methoxy-6-polyprenyl-1,4-benzoquinol methylase, mitochondrial (327 aa).

The N-terminal 42 residues, 1 to 42 (MAAPGSCALWSYCGRGWSRAMRGCQLLGLRSSWPGDLLSARL), are a transit peptide targeting the mitochondrion. S-adenosyl-L-methionine-binding positions include T117, D171, and 199 to 200 (DA).

This sequence belongs to the class I-like SAM-binding methyltransferase superfamily. MenG/UbiE family. Component of a multi-subunit COQ enzyme complex, composed of at least COQ3, COQ4, COQ5, COQ6, COQ7 and COQ9. Interacts with PYURF; the interaction is direct, stabilizes COQ5 protein and associates PYURF with COQ enzyme complex. As to expression, widely expressed, with highest levels in liver, lung, placenta and skeletal muscle.

It localises to the mitochondrion inner membrane. It carries out the reaction 2-methoxy-6-(all-trans-decaprenyl)benzene-1,4-diol + S-adenosyl-L-methionine = 5-methoxy-2-methyl-3-(all-trans-decaprenyl)benzene-1,4-diol + S-adenosyl-L-homocysteine + H(+). It participates in cofactor biosynthesis; ubiquinone biosynthesis. In terms of biological role, methyltransferase required for the conversion of 2-decaprenyl-6-methoxy-1,4-benzoquinol (DDMQH2) to 2-decaprenyl-3-methyl-6-methoxy-1,4-benzoquinol (DMQH2). The polypeptide is 2-methoxy-6-polyprenyl-1,4-benzoquinol methylase, mitochondrial (Homo sapiens (Human)).